The primary structure comprises 405 residues: uncharacterized protein (405 aa).

The next 10 helical transmembrane spans lie at 9–29 (VFAL…VTIV), 41–61 (VFLA…ASFC), 74–94 (VLAG…YSVT), 98–118 (QAFF…GAFF), 138–158 (ANGV…GLGG), 168–190 (LVVG…LHVN), 227–247 (ALAG…AVLH), 252–272 (WWGM…VIAI), 291–311 (LVMS…LCAL), and 373–393 (IAFI…LAQP).

The protein belongs to the major facilitator superfamily. Drug:H(+) antiporter-3 (DHA3) (TC 2.A.1.21) family.

The protein localises to the cell membrane. This is an uncharacterized protein from Bacillus subtilis (strain 168).